The chain runs to 169 residues: Nucleoside diphosphate kinase 3 (169 aa).

Positions 29, 105, 111, 122, 129, and 132 each coordinate ADP. The active-site Pros-phosphohistidine intermediate is H135.

This sequence belongs to the NDK family. In terms of assembly, homohexamer. Requires Mg(2+) as cofactor.

Its subcellular location is the mitochondrion outer membrane. It is found in the cytoplasm. The protein localises to the cytoskeleton. It localises to the cilium basal body. It carries out the reaction a 2'-deoxyribonucleoside 5'-diphosphate + ATP = a 2'-deoxyribonucleoside 5'-triphosphate + ADP. The catalysed reaction is a ribonucleoside 5'-diphosphate + ATP = a ribonucleoside 5'-triphosphate + ADP. Functionally, catalyzes the phosphorylation of ribonucleosides and deoxyribonucleoside diphosphates, other than ATP, into the corresponding triphosphates with ATP as the major phosphate donor. The ATP gamma phosphate is transferred to the nucleoside diphosphate beta phosphate via a ping-pong mechanism, using a phosphorylated active-site intermediate. Through the catalyzed exchange of gamma-phosphate between di- and triphosphonucleosides participates in regulation of intracellular nucleotide homeostasis. Required for ciliary function during renal development. Its function is as follows. Independently of its kinase activity, facilitates mitochondrial tethering prior to membrane fusion through its direct membrane-binding and hexamerization. Implicated in repair of both single- and double-stranded breaks in DNA, independently of its kinase activity. This is Nucleoside diphosphate kinase 3 from Danio rerio (Zebrafish).